The primary structure comprises 231 residues: 7-cyano-7-deazaguanine synthase (231 aa).

8-18 (FSGGQDSTTCL) is an ATP binding site. Positions 188, 197, 200, and 203 each coordinate Zn(2+).

It belongs to the QueC family. Zn(2+) serves as cofactor.

It catalyses the reaction 7-carboxy-7-deazaguanine + NH4(+) + ATP = 7-cyano-7-deazaguanine + ADP + phosphate + H2O + H(+). It functions in the pathway purine metabolism; 7-cyano-7-deazaguanine biosynthesis. Catalyzes the ATP-dependent conversion of 7-carboxy-7-deazaguanine (CDG) to 7-cyano-7-deazaguanine (preQ(0)). This is 7-cyano-7-deazaguanine synthase from Salmonella paratyphi A (strain ATCC 9150 / SARB42).